Here is a 303-residue protein sequence, read N- to C-terminus: MGRRRKGRDISGWLIVDKPAGLTSTAVVNKVRWALDAKKAGHAGTLDPDATGVLAVALGEATKTVPYVTGALKAYEFEIRLGQATNTDDAEGEVIAQSDLRPTEDEIKEALSAFIGDIEQVPPQFSAVKVDGERAYKRARDGEEMTLAARPLYVDSLLLIDRPDADHVLLEMVCGKGGYVRSIARDLGAALGCLAHVRSLRRIWSGPFDAKNAADLETIEALARTPELDAHVQPLETALDDMPEVKATAEGAVRLRNGNPGMVLASGIEYGETCWASFESRAIAIGRYKSGELHPVRVINAPD.

The active-site Nucleophile is the aspartate 47.

The protein belongs to the pseudouridine synthase TruB family. Type 1 subfamily.

The enzyme catalyses uridine(55) in tRNA = pseudouridine(55) in tRNA. Responsible for synthesis of pseudouridine from uracil-55 in the psi GC loop of transfer RNAs. This Roseobacter denitrificans (strain ATCC 33942 / OCh 114) (Erythrobacter sp. (strain OCh 114)) protein is tRNA pseudouridine synthase B.